The sequence spans 321 residues: Mechanosensory protein 3 (321 aa).

LIM zinc-binding domains lie at Asn-27–Ile-86 and His-87–Asp-152. Residues Arg-217–Lys-276 constitute a DNA-binding region (homeobox).

In terms of assembly, interacts with unc-86; the heterooligomer binds to the promoters of mec-3, mec-4 and mec-7. As to expression, expressed in the mechanosensory neurons ALML, ALMR, PLML, PLMR, AVM and PVM, and the FLPL and FLPR neurons.

It is found in the nucleus. Its function is as follows. Transcription factor. Specifies differentiation of the set of six touch receptor neurons (TRNs). May positively modulate expression of both its own gene and also of homeobox ARX homolog alr-1 in TRNs, forming a positive feedback loop with alr-1, thereby restricting the variability of expression of mec-3. Required to determine the identity of ALM sensory neurons, acting by interacting with unc-86, thereby preventing unc-86 cooperating with pag-3 to induce BDU-neuron specific genes. Binds cooperatively as a heterodimer with unc-86 to sites in the mec-3 gene promoter. Promotes outgrowth of lateral dendritic branches on the PVD nociceptive neurons, probably acting both directly, and upstream of zinc finger protein egl-46. This Caenorhabditis elegans protein is Mechanosensory protein 3 (mec-3).